The chain runs to 433 residues: Type I acyl-CoA thioesterase mpaH (433 aa).

Residues 58-246 (HGVGLPKELY…VKARFDAAAD (189 aa)) form an abhydrolase domain region. Position 60 (valine 60) interacts with substrate. Serine 139 serves as the catalytic Nucleophile. Phenylalanine 140 is a binding site for substrate. Active-site residues include aspartate 163 and histidine 365.

The protein belongs to the AB hydrolase superfamily. MpaH hydrolase family. As to quaternary structure, homodimer.

It localises to the peroxisome matrix. The catalysed reaction is mycophenolyl-CoA + H2O = mycophenolate + CoA + H(+). Its pathway is secondary metabolite biosynthesis; terpenoid biosynthesis. Functionally, type I acyl-CoA thioesterase; part of the gene cluster that mediates the biosynthesis of mycophenolic acid (MPA), the first isolated antibiotic natural product in the world obtained from a culture of Penicillium brevicompactum in 1893. MpaH acts as a peroxisomal acyl-CoA hydrolase that converts MPA-CoA into the final product MPA. The first step of the pathway is the synthesis of 5-methylorsellinic acid (5MOA) by the cytosolic polyketide synthase mpaC. 5MOA is then converted to the phthalide compound 5,7-dihydroxy-4,6-dimethylphthalide (DHMP) by the endoplasmic reticulum-bound cytochrome P450 monooxygenase mpaDE. MpaDE first catalyzes hydroxylation of 5-MOA to 4,6-dihydroxy-2-(hydroxymethyl)-3-methylbenzoic acid (DHMB). MpaDE then acts as a lactone synthase that catalyzes the ring closure to convert DHMB into DHMP. The next step is the prenylation of DHMP by the Golgi apparatus-associated prenyltransferase mpaA to yield farnesyl-DHMP (FDHMP). The ER-bound oxygenase mpaB then mediates the oxidative cleavage the C19-C20 double bond in FDHMP to yield FDHMP-3C via a mycophenolic aldehyde intermediate. The O-methyltransferase mpaG catalyzes the methylation of FDHMP-3C to yield MFDHMP-3C. After the cytosolic methylation of FDHMP-3C, MFDHMP-3C enters into peroxisomes probably via free diffusion due to its low molecular weight. Upon a peroxisomal CoA ligation reaction, catalyzed by a beta-oxidation component enzyme acyl-CoA ligase ACL891, MFDHMP-3C-CoA would then be restricted to peroxisomes for the following beta-oxidation pathway steps. The peroxisomal beta-oxidation machinery than converts MFDHMP-3C-CoA into MPA_CoA, via a beta-oxidation chain-shortening process. Finally mpaH acts as a peroxisomal acyl-CoA hydrolase with high substrate specificity toward MPA-CoA to release the final product MPA. The chain is Type I acyl-CoA thioesterase mpaH from Penicillium roqueforti (strain FM164).